Here is a 276-residue protein sequence, read N- to C-terminus: Dermonecrotic toxin LlSicTox-alphaIV1ii (276 aa).

Histidine 5 is a catalytic residue. Mg(2+) contacts are provided by glutamate 25 and aspartate 27. Histidine 41 acts as the Nucleophile in catalysis. Disulfide bonds link cysteine 45-cysteine 51 and cysteine 47-cysteine 193. Aspartate 85 is a binding site for Mg(2+).

The protein belongs to the arthropod phospholipase D family. Class II subfamily. Mg(2+) serves as cofactor. In terms of tissue distribution, expressed by the venom gland.

It is found in the secreted. The enzyme catalyses an N-(acyl)-sphingosylphosphocholine = an N-(acyl)-sphingosyl-1,3-cyclic phosphate + choline. It catalyses the reaction an N-(acyl)-sphingosylphosphoethanolamine = an N-(acyl)-sphingosyl-1,3-cyclic phosphate + ethanolamine. The catalysed reaction is a 1-acyl-sn-glycero-3-phosphocholine = a 1-acyl-sn-glycero-2,3-cyclic phosphate + choline. It carries out the reaction a 1-acyl-sn-glycero-3-phosphoethanolamine = a 1-acyl-sn-glycero-2,3-cyclic phosphate + ethanolamine. Functionally, dermonecrotic toxins cleave the phosphodiester linkage between the phosphate and headgroup of certain phospholipids (sphingolipid and lysolipid substrates), forming an alcohol (often choline) and a cyclic phosphate. This toxin acts on sphingomyelin (SM). It may also act on ceramide phosphoethanolamine (CPE), lysophosphatidylcholine (LPC) and lysophosphatidylethanolamine (LPE), but not on lysophosphatidylserine (LPS), and lysophosphatidylglycerol (LPG). It acts by transphosphatidylation, releasing exclusively cyclic phosphate products as second products. Induces dermonecrosis, hemolysis, increased vascular permeability, edema, inflammatory response, and platelet aggregation. The chain is Dermonecrotic toxin LlSicTox-alphaIV1ii from Loxosceles laeta (South American recluse spider).